Reading from the N-terminus, the 500-residue chain is Lysine--tRNA ligase (500 aa).

Residues E410 and E417 each contribute to the Mg(2+) site.

The protein belongs to the class-II aminoacyl-tRNA synthetase family. In terms of assembly, homodimer. Mg(2+) is required as a cofactor.

The protein localises to the cytoplasm. The enzyme catalyses tRNA(Lys) + L-lysine + ATP = L-lysyl-tRNA(Lys) + AMP + diphosphate. The chain is Lysine--tRNA ligase from Shewanella sediminis (strain HAW-EB3).